A 399-amino-acid polypeptide reads, in one-letter code: Glutathione-independent formaldehyde dehydrogenase (399 aa).

Residue C47 coordinates Zn(2+). 3 residues coordinate NAD(+): G48, S49, and H52. Zn(2+)-binding residues include H68, C98, C101, C104, C112, and D170. Residues V198, D218, R223, V263, R268, P300, Q338, and T339 each contribute to the NAD(+) site.

Belongs to the zinc-containing alcohol dehydrogenase family. As to quaternary structure, homotetramer. The cofactor is Zn(2+).

The enzyme catalyses formaldehyde + NAD(+) + H2O = formate + NADH + 2 H(+). It catalyses the reaction acetaldehyde + NAD(+) + H2O = acetate + NADH + 2 H(+). Its function is as follows. Dehydrogenase that catalyzes the NAD(+)-dependent oxidation of formaldehyde and acetaldehyde. Shows no detectable activity against either aldehydes with longer carbon chains or ethanol. This Pseudomonas aeruginosa (strain LESB58) protein is Glutathione-independent formaldehyde dehydrogenase.